Consider the following 365-residue polypeptide: MDSFQPLFEQLFGSEWGVSLFLLAKNLLLILAIIIPLLLAVAYLTFAERKIIAFMQVRVGPNRVTFFGIPWLGGWGQPIADAVKAIMKEIIIPTGANKFLFLLAPILAITPALAAWAVVPFSPELVLADINAALLYILAMTSLGVYGVIIAGWASNSKYAFLGAMRSAAQVISYELAMGFALVCVLMMSSSLNLGDIVAGQQGGSFLNWYMIPLFPMFLVYFISGVAETNRLPFDVAEGESEIVAGFHVDYSGMAFTIFFLAEYANMILVATLASIMFLGGWLPPVDIIPFNLIPGVVWLLLKIAIMLFFFLWFRATFPRYRYDQIMRLGWKVFIPITLIWIVLLGAVMQLPEAALQSFPLNLWF.

8 helical membrane passes run 27 to 47 (LLLILAIIIPLLLAVAYLTFA), 99 to 119 (FLFLLAPILAITPALAAWAVV), 133 to 153 (ALLYILAMTSLGVYGVIIAGW), 168 to 188 (AAQVISYELAMGFALVCVLMM), 206 to 226 (FLNWYMIPLFPMFLVYFISGV), 268 to 288 (ILVATLASIMFLGGWLPPVDI), 294 to 314 (IPGVVWLLLKIAIMLFFFLWF), and 329 to 349 (LGWKVFIPITLIWIVLLGAVM).

The protein belongs to the complex I subunit 1 family. As to quaternary structure, NDH-1 is composed of 14 different subunits. Subunits NuoA, H, J, K, L, M, N constitute the membrane sector of the complex.

It localises to the cell inner membrane. The catalysed reaction is a quinone + NADH + 5 H(+)(in) = a quinol + NAD(+) + 4 H(+)(out). Its function is as follows. NDH-1 shuttles electrons from NADH, via FMN and iron-sulfur (Fe-S) centers, to quinones in the respiratory chain. The immediate electron acceptor for the enzyme in this species is believed to be ubiquinone. Couples the redox reaction to proton translocation (for every two electrons transferred, four hydrogen ions are translocated across the cytoplasmic membrane), and thus conserves the redox energy in a proton gradient. This subunit may bind ubiquinone. This chain is NADH-quinone oxidoreductase subunit H, found in Nitrosomonas eutropha (strain DSM 101675 / C91 / Nm57).